We begin with the raw amino-acid sequence, 508 residues long: Phenylalanine--tRNA ligase alpha subunit (508 aa).

Alanine 2 is subject to N-acetylalanine. Serine 193 and serine 301 each carry phosphoserine. At lysine 311 the chain carries N6-acetyllysine. L-phenylalanine is bound by residues threonine 329, 372–374, and tyrosine 412; that span reads QIE. Glutamate 414 is a binding site for Mg(2+). Phenylalanine 438 contacts L-phenylalanine.

This sequence belongs to the class-II aminoacyl-tRNA synthetase family. Phe-tRNA synthetase alpha subunit type 2 subfamily. In terms of assembly, heterotetramer; dimer of two heterodimers formed by FARSA and FARSB. Requires Mg(2+) as cofactor.

It localises to the cytoplasm. It catalyses the reaction tRNA(Phe) + L-phenylalanine + ATP = L-phenylalanyl-tRNA(Phe) + AMP + diphosphate + H(+). In Mus musculus (Mouse), this protein is Phenylalanine--tRNA ligase alpha subunit (Farsa).